The chain runs to 476 residues: tRNA(Ile)-lysidine synthase (476 aa).

An ATP-binding site is contributed by 30–35 (SGGPDS).

Belongs to the tRNA(Ile)-lysidine synthase family.

The protein resides in the cytoplasm. The enzyme catalyses cytidine(34) in tRNA(Ile2) + L-lysine + ATP = lysidine(34) in tRNA(Ile2) + AMP + diphosphate + H(+). Ligates lysine onto the cytidine present at position 34 of the AUA codon-specific tRNA(Ile) that contains the anticodon CAU, in an ATP-dependent manner. Cytidine is converted to lysidine, thus changing the amino acid specificity of the tRNA from methionine to isoleucine. This Bacillus cereus (strain ATCC 14579 / DSM 31 / CCUG 7414 / JCM 2152 / NBRC 15305 / NCIMB 9373 / NCTC 2599 / NRRL B-3711) protein is tRNA(Ile)-lysidine synthase.